Here is a 378-residue protein sequence, read N- to C-terminus: Beta-1,3-N-acetylglucosaminyltransferase lunatic fringe (378 aa).

Over 1–8 the chain is Cytoplasmic; that stretch reads MLQRCGRR. The chain crosses the membrane as a helical; Signal-anchor for type II membrane protein span at residues 9–29; sequence LLLALVGALLACLLVLTADPP. Topologically, residues 30–378 are lumenal; it reads PTPMPAERGR…TPWCPRSAIF (349 aa). Residues 85 to 108 are disordered; sequence RDADPPPGVASRQGDGHPRPPAEV. Arg-128 is a substrate binding site. The N-linked (GlcNAc...) asparagine glycan is linked to Asn-166. Cystine bridges form between Cys-167–Cys-178 and Cys-196–Cys-259. Residue Asp-200 coordinates substrate. Asp-201 contributes to the Mn(2+) binding site. Residue Asp-289 is part of the active site. Residue His-313 participates in Mn(2+) binding. An intrachain disulfide couples Cys-363 to Cys-372.

It belongs to the glycosyltransferase 31 family. Mn(2+) is required as a cofactor. Requires Co(2+) as cofactor. In terms of processing, a soluble form may be derived from the membrane form by proteolytic processing. As to expression, detected at 12.5 dpc in all tissues examined with the highest level observed in adult brain and spleen. Detected in the dental epithelium.

The protein resides in the golgi apparatus. It is found in the golgi apparatus membrane. The catalysed reaction is 3-O-(alpha-L-fucosyl)-L-threonyl-[EGF-like domain protein] + UDP-N-acetyl-alpha-D-glucosamine = 3-O-(N-acetyl-beta-D-glucosaminyl-(1-&gt;3)-alpha-L-fucosyl)-L-threonyl-[EGF-like domain protein] + UDP + H(+). It carries out the reaction 3-O-(alpha-L-fucosyl)-L-seryl-[EGF-like domain protein] + UDP-N-acetyl-alpha-D-glucosamine = 3-O-(N-acetyl-beta-D-glucosaminyl-(1-&gt;3)-alpha-L-fucosyl)-L-seryl-[EGF-like domain protein] + UDP + H(+). Functionally, glycosyltransferase that initiates the elongation of O-linked fucose residues attached to EGF-like repeats in the extracellular domain of Notch molecules. Modulates NOTCH1 activity by modifying O-fucose residues at specific EGF-like domains resulting in inhibition of NOTCH1 activation by JAG1 and enhancement of NOTCH1 activation by DLL1 via an increase in its binding to DLL1. Decreases the binding of JAG1 to NOTCH2 but not that of DLL1. Essential mediator of somite segmentation and patterning. During somite boundary formation, it restricts Notch activity in the presomitic mesoderm to a boundary-forming territory in the posterior half of the prospective somite. In this region, Notch function activates a set of genes that are involved in boundary formation and in anterior-posterior somite identity. Ectopically expressed in the thymus, Lfgn inhibits Notch signaling which results in inhibition of T-cell commitment and promotes B-cell development in lymphoid progenitors. May play a role in boundary formation of the enamel knot. This chain is Beta-1,3-N-acetylglucosaminyltransferase lunatic fringe, found in Mus musculus (Mouse).